A 236-amino-acid chain; its full sequence is MKIGIIGAMEPEVAHLIAAMTNATSQTIAGIEFIAGTLAGKDVVVTRSGIGKVAASIATTLLIEKYAPDAVINTGSAGGFVDTLAIGDIVISSEVRHHDVDVTAFGYEIGQMAQQPAAFVPAAHLVEAANKAIAQLGEVKAIEGLICTGDSFICDPIRTQAMLKNFPTMAACEMEGAAIAQVCHQFGVPFVVIRSLSDNANNDSPVDFDSYIVKAGYHSALMVMLLLEQLNPSAIK.

Glutamate 12 serves as the catalytic Proton acceptor. Substrate-binding positions include glycine 78, isoleucine 153, and 174 to 175 (ME). Catalysis depends on aspartate 198, which acts as the Proton donor.

This sequence belongs to the PNP/UDP phosphorylase family. MtnN subfamily.

It catalyses the reaction S-adenosyl-L-homocysteine + H2O = S-(5-deoxy-D-ribos-5-yl)-L-homocysteine + adenine. The enzyme catalyses S-methyl-5'-thioadenosine + H2O = 5-(methylsulfanyl)-D-ribose + adenine. It carries out the reaction 5'-deoxyadenosine + H2O = 5-deoxy-D-ribose + adenine. Its pathway is amino-acid biosynthesis; L-methionine biosynthesis via salvage pathway; S-methyl-5-thio-alpha-D-ribose 1-phosphate from S-methyl-5'-thioadenosine (hydrolase route): step 1/2. Functionally, catalyzes the irreversible cleavage of the glycosidic bond in both 5'-methylthioadenosine (MTA) and S-adenosylhomocysteine (SAH/AdoHcy) to adenine and the corresponding thioribose, 5'-methylthioribose and S-ribosylhomocysteine, respectively. Also cleaves 5'-deoxyadenosine, a toxic by-product of radical S-adenosylmethionine (SAM) enzymes, into 5-deoxyribose and adenine. The polypeptide is 5'-methylthioadenosine/S-adenosylhomocysteine nucleosidase (Shewanella baltica (strain OS185)).